Consider the following 1135-residue polypeptide: Large proline-rich protein bag6-A (1135 aa).

Residues 7–82 (MEVTVKTLDS…HLVERAPPQT (76 aa)) enclose the Ubiquitin-like domain. 8 disordered regions span residues 76–114 (ERAP…RNGN), 194–238 (EQAA…SPSE), 350–407 (TGNG…PHPR), 498–522 (SFQF…VPGA), 552–612 (QGGS…QHLS), 661–698 (PVST…ESLP), 1075–1099 (KATG…EAQG), and 1116–1135 (NESY…RGDP). Low complexity predominate over residues 79–100 (PPQTQPSTGGPSTSSSTSPTSS). Residues 212 to 227 (RETLPQTTQNTDGQSN) are compositionally biased toward polar residues. The segment covering 228–237 (TTPTSHPSPS) has biased composition (low complexity). Polar residues predominate over residues 367–387 (QPPSTNTSEPQRPNTENQPPS). Composition is skewed to low complexity over residues 555-600 (SSTS…SVPS) and 663-672 (STAPTQSASQ). Pro residues predominate over residues 673–692 (APPPSSPPPPPAHSSPPPAA). The span at 1087–1099 (CVRRELDNSEAQG) shows a compositional bias: basic and acidic residues. Positions 1116 to 1129 (NESYSAQRFPNTQR) are enriched in polar residues.

As to quaternary structure, component of the bag6/bat3 complex.

It is found in the cytoplasm. Its subcellular location is the cytosol. The protein resides in the nucleus. The protein localises to the secreted. It localises to the extracellular exosome. Its function is as follows. ATP-independent molecular chaperone preventing the aggregation of misfolded and hydrophobic patches-containing proteins. Functions as part of a cytosolic protein quality control complex, the bag6/bat3 complex, which maintains these client proteins in a soluble state and participates in their proper delivery to the endoplasmic reticulum or alternatively can promote their sorting to the proteasome where they undergo degradation. The bag6/bat3 complex is involved in the post-translational delivery of tail-anchored/type II transmembrane proteins to the endoplasmic reticulum membrane. Similarly, the bag6/bat3 complex also functions as a sorting platform for proteins of the secretory pathway that are mislocalized to the cytosol either delivering them to the proteasome for degradation or to the endoplasmic reticulum. The bag6/bat3 complex also plays a role in the endoplasmic reticulum-associated degradation (ERAD), a quality control mechanism that eliminates unwanted proteins of the endoplasmic reticulum through their retrotranslocation to the cytosol and their targeting to the proteasome. It maintains these retrotranslocated proteins in an unfolded yet soluble state condition in the cytosol to ensure their proper delivery to the proteasome. Also required for selective ubiquitin-mediated degradation of defective nascent chain polypeptides by the proteasome. Also involved in endoplasmic reticulum stress-induced pre-emptive quality control, a mechanism that selectively attenuates the translocation of newly synthesized proteins into the endoplasmic reticulum and reroutes them to the cytosol for proteasomal degradation. May ensure the proper degradation of these proteins and thereby protects the endoplasmic reticulum from protein overload upon stress. By stabilizing a large spectrum of proteins, may indirectly affect different biological processes including apoptosis. By controlling the steady-state expression of the IGF1R receptor, indirectly regulates the insulin-like growth factor receptor signaling pathway. Functionally, when nuclear, may also act as a component of some chromatin regulator complex. The protein is Large proline-rich protein bag6-A of Xenopus laevis (African clawed frog).